We begin with the raw amino-acid sequence, 212 residues long: Pyridoxine/pyridoxamine 5'-phosphate oxidase (212 aa).

Substrate-binding positions include R8 to Y11 and K66. FMN is bound by residues R61 to K66, F76 to T77, R82, K83, and Q105. Residues Y123, R127, and S131 each coordinate substrate. Residues Q140–S141 and W185 contribute to the FMN site. R191–H193 lines the substrate pocket. R195 is an FMN binding site.

The protein belongs to the pyridoxamine 5'-phosphate oxidase family. As to quaternary structure, homodimer. The cofactor is FMN.

It carries out the reaction pyridoxamine 5'-phosphate + O2 + H2O = pyridoxal 5'-phosphate + H2O2 + NH4(+). It catalyses the reaction pyridoxine 5'-phosphate + O2 = pyridoxal 5'-phosphate + H2O2. Its pathway is cofactor metabolism; pyridoxal 5'-phosphate salvage; pyridoxal 5'-phosphate from pyridoxamine 5'-phosphate: step 1/1. The protein operates within cofactor metabolism; pyridoxal 5'-phosphate salvage; pyridoxal 5'-phosphate from pyridoxine 5'-phosphate: step 1/1. Its function is as follows. Catalyzes the oxidation of either pyridoxine 5'-phosphate (PNP) or pyridoxamine 5'-phosphate (PMP) into pyridoxal 5'-phosphate (PLP). The sequence is that of Pyridoxine/pyridoxamine 5'-phosphate oxidase from Shewanella putrefaciens (strain CN-32 / ATCC BAA-453).